Here is a 241-residue protein sequence, read N- to C-terminus: RAD9, HUS1, RAD1-interacting nuclear orphan protein 1 (241 aa).

The segment covering 1-10 (MPPRKKRRQA) has biased composition (basic residues). A disordered region spans residues 1 to 27 (MPPRKKRRQAAQKPQLLFHQQPLEAPK). The short motif at 56 to 62 (SWVSPQF) is the RAD1-binding motif element. Disordered regions lie at residues 68–134 (SWFP…PLVP) and 157–204 (IPPD…LVTD). A compositionally biased stretch (basic residues) spans 72-87 (GKRKHHHRDHARRSSR). Residues 100–110 (ETPQSSASSAT) show a composition bias toward polar residues. Residues 129–136 (GRPLVPML) carry the D-box motif. The short motif at 177 to 181 (LRENS) is the KEN box element. Polar residues predominate over residues 181–193 (SLPSCSLHTSTPK).

In terms of assembly, interacts (when phosphorylated by PLK1) with POLQ; promoting POLQ recruitment to DNA damage sites. Interacts with RAD1; interaction is direct and promotes association with the 9-1-1 (RAD9-RAD1-HUS1) complex. Interacts with RAD18. Interacts with TOPBP1. Interacts with UBE2N. In terms of processing, phosphorylated by PLK1, promoting interaction with polymerase theta (POLQ). Ubiquitinated and degraded by the APC/C complex upon mitotic exit.

It is found in the nucleus. The protein localises to the chromosome. Involved in microhomology-mediated end-joining (MMEJ) DNA repair by promoting recruitment of polymerase theta (POLQ) to DNA damage sites during mitosis. MMEJ is an alternative non-homologous end-joining (NHEJ) machinery that takes place during mitosis to repair double-strand breaks in DNA that originate in S-phase. Accumulates in M-phase; following phosphorylation by PLK1, interacts with POLQ, enabling its recruitment to double-strand breaks for subsequent repair. Also involved in the DNA damage response (DDR) signaling in response to genotoxic stresses such as ionizing radiation (IR) during the S phase. Recruited to sites of DNA damage through interaction with the 9-1-1 cell-cycle checkpoint response complex and TOPBP1 in a ATR-dependent manner. Required for the progression of the G1 to S phase transition. Plays a role in the stimulation of CHEK1 phosphorylation. This Bos taurus (Bovine) protein is RAD9, HUS1, RAD1-interacting nuclear orphan protein 1 (RHNO1).